Consider the following 359-residue polypeptide: Decorin (359 aa).

Residues 1–16 (MKATIILLLLAQVSWA) form the signal peptide. Residues 17-30 (GPFQQRGLFDFMLE) constitute a propeptide that is removed on maturation. O-linked (Xyl...) (glycosaminoglycan) serine glycosylation is present at serine 34. Intrachain disulfides connect cysteine 54/cysteine 60 and cysteine 58/cysteine 67. 12 LRR repeats span residues 73 to 93 (DKVP…NNKI), 94 to 117 (TEIK…NNKI), 118 to 141 (SKVS…KNQL), 142 to 162 (KELP…ENEI), 163 to 186 (TKVR…TNPL), 187 to 212 (KSSG…DTNI), 213 to 233 (TSIP…GNKI), 234 to 257 (SRVD…FNSI), 258 to 281 (SAVD…NNKL), 282 to 304 (TRVP…NNNI), 305 to 334 (SVVG…SNPV), and 335 to 359 (QYWE…GNYK). A glycan (N-linked (GlcNAc...) asparagine) is linked at asparagine 211. N-linked (GlcNAc...) asparagine glycosylation is found at asparagine 262 and asparagine 303. Residues cysteine 313 and cysteine 346 are joined by a disulfide bond.

The protein belongs to the small leucine-rich proteoglycan (SLRP) family. SLRP class I subfamily. In terms of assembly, binds to type I and type II collagen, fibronectin and TGF-beta. Forms a ternary complex with MFAP2 and ELN. Interacts with DPT. In terms of processing, the attached glycosaminoglycan chain can be either chondroitin sulfate or dermatan sulfate depending upon the tissue of origin. In terms of tissue distribution, detected in placenta (at protein level). Detected in cerebrospinal fluid, fibroblasts and urine (at protein level).

It is found in the secreted. The protein localises to the extracellular space. The protein resides in the extracellular matrix. May affect the rate of fibrils formation. In Homo sapiens (Human), this protein is Decorin (DCN).